The sequence spans 321 residues: Fructose-1,6-bisphosphatase class 1 (321 aa).

Residues E93, D114, L116, and D117 each coordinate Mg(2+). Substrate-binding positions include D117 to S120, N205, Y233, and K263. Residue E269 coordinates Mg(2+).

It belongs to the FBPase class 1 family. In terms of assembly, homotetramer. Requires Mg(2+) as cofactor.

The protein resides in the cytoplasm. The enzyme catalyses beta-D-fructose 1,6-bisphosphate + H2O = beta-D-fructose 6-phosphate + phosphate. The protein operates within carbohydrate biosynthesis; gluconeogenesis. This chain is Fructose-1,6-bisphosphatase class 1, found in Persephonella marina (strain DSM 14350 / EX-H1).